The following is a 579-amino-acid chain: Nuclear receptor subfamily 1 group D member 2 (579 aa).

A required for phosphorylation by CSNK1E and cytoplasmic localization region spans residues 1–60 (MEVNAGGVIAYISSSSSASSPASCHSEGSENSFQSSSSSVPSSPNSSNSDTNGNPKNGDL). Residues 1 to 99 (MEVNAGGVIA…HSGVTKFSGM (99 aa)) form a modulating region. The span at 13 to 54 (SSSSSASSPASCHSEGSENSFQSSSSSVPSSPNSSNSDTNGN) shows a compositional bias: low complexity. Residues 13-61 (SSSSSASSPASCHSEGSENSFQSSSSSVPSSPNSSNSDTNGNPKNGDLA) are disordered. Residue Ser-46 is modified to Phosphoserine; by GSK3-beta. Residues 100–176 (VLLCKVCGDV…VGMSRDAVRF (77 aa)) constitute a DNA-binding region (nuclear receptor). NR C4-type zinc fingers lie at residues 103-123 (CKVCGDVASGFHYGVHACEGC) and 140-164 (CLKNENCSIMRMNRNRCQQCRFKKC). N6-acetyllysine; by KAT5 is present on residues Lys-162 and Lys-163. Residues 222 to 250 (PAQEQLRPKPQLEQENIKSSSPPSSDFAK) form a disordered region. Positions 227-237 (LRPKPQLEQEN) are enriched in basic and acidic residues. Cystine bridges form between Cys-337–Cys-343 and Cys-374–Cys-384. Residues 369-579 (KNSYLCNTGG…EELLAFKVHP (211 aa)) enclose the NR LBD domain. Cys-384 and His-568 together coordinate heme. The interaction with ZNHIT1 stretch occupies residues 397–579 (SGHEIWEEFS…EELLAFKVHP (183 aa)).

Belongs to the nuclear hormone receptor family. NR1 subfamily. In terms of assembly, binds DNA as a monomer or a homodimer. Interacts with NCOA5 coactivator, leading to a strong increase of transcription of target genes. Interacts (via N-terminus) with KAT5. Interacts (via C-terminus) with HDAC1. Interacts with ZNHIT1. Interacts with SIAH2. Post-translationally, deacetylated by HDAC1. Acetylation and deacetylation regulate its transcriptional regulatory activity. Under more reducing intracellular redox conditions, Cys-384 is in its heme-bound state, which is optimal for recruitment of the NCOR1/HDAC3 corepressor complex and repression of target genes. When subjected to oxidative stress conditions, Cys-384 undergoes oxidation to form a disulfide bridge with Cys-374, also triggering a ligand switch that results in release of bound heme and derepression of target genes. In terms of processing, ubiquitinated by SIAH2; leading to proteasomal degradation. Post-translationally, phosphorylated by CSNK1E; phosphorylation enhances its cytoplasmic localization. In terms of tissue distribution, widely expressed. Expressed at high levels in the liver, adipose tissue, skeletal muscle and brain. Expression oscillates diurnally in the suprachiasmatic nucleus (SCN) of the hypothalamus as well as in peripheral tissues.

It localises to the nucleus. It is found in the cytoplasm. With respect to regulation, the heme-bound form can bind gaseous signaling molecules such as CO and nitric oxide (NO) and NO can reverse its transcriptional repressor activity. Transcriptional repressor which coordinates circadian rhythm and metabolic pathways in a heme-dependent manner. Integral component of the complex transcription machinery that governs circadian rhythmicity and forms a critical negative limb of the circadian clock by directly repressing the expression of core clock components BMAL1 and CLOCK. Also regulates genes involved in metabolic functions, including lipid metabolism and the inflammatory response. Acts as a receptor for heme which stimulates its interaction with the NCOR1/HDAC3 corepressor complex, enhancing transcriptional repression. Recognizes two classes of DNA response elements within the promoter of its target genes and can bind to DNA as either monomers or homodimers, depending on the nature of the response element. Binds as a monomer to a response element composed of the consensus half-site motif 5'-[A/G]GGTCA-3' preceded by an A/T-rich 5' sequence (RevRE), or as a homodimer to a direct repeat of the core motif spaced by two nuclegotides (RevDR-2). Acts as a potent competitive repressor of ROR alpha (RORA) function and also negatively regulates the expression of NR1D1. Regulates lipid and energy homeostasis in the skeletal muscle via repression of genes involved in lipid metabolism and myogenesis including: CD36, FABP3, FABP4, UCP3, SCD1 and MSTN. Regulates hepatic lipid metabolism via the repression of APOC3. Represses gene expression at a distance in macrophages by inhibiting the transcription of enhancer-derived RNAs (eRNAs). In addition to its activity as a repressor, can also act as a transcriptional activator. Acts as a transcriptional activator of the sterol regulatory element-binding protein 1 (SREBF1) and the inflammatory mediator interleukin-6 (IL6) in the skeletal muscle. Plays a role in the regulation of circadian sleep/wake cycle; essential for maintaining wakefulness during the dark phase or active period. Key regulator of skeletal muscle mitochondrial function; negatively regulates the skeletal muscle expression of core clock genes and genes involved in mitochondrial biogenesis, fatty acid beta-oxidation and lipid metabolism. May play a role in the circadian control of neutrophilic inflammation in the lung. This Homo sapiens (Human) protein is Nuclear receptor subfamily 1 group D member 2.